Here is a 270-residue protein sequence, read N- to C-terminus: 4-hydroxy-tetrahydrodipicolinate reductase (270 aa).

Residues 9–14 and E35 contribute to the NAD(+) site; that span reads GAGGRM. R36 contributes to the NADP(+) binding site. Residues 99 to 101 and 123 to 126 contribute to the NAD(+) site; these read GTT and ASNF. The active-site Proton donor/acceptor is H156. Residue H157 coordinates (S)-2,3,4,5-tetrahydrodipicolinate. K160 (proton donor) is an active-site residue. 166 to 167 is a (S)-2,3,4,5-tetrahydrodipicolinate binding site; that stretch reads GT.

The protein belongs to the DapB family.

It is found in the cytoplasm. It carries out the reaction (S)-2,3,4,5-tetrahydrodipicolinate + NAD(+) + H2O = (2S,4S)-4-hydroxy-2,3,4,5-tetrahydrodipicolinate + NADH + H(+). It catalyses the reaction (S)-2,3,4,5-tetrahydrodipicolinate + NADP(+) + H2O = (2S,4S)-4-hydroxy-2,3,4,5-tetrahydrodipicolinate + NADPH + H(+). It functions in the pathway amino-acid biosynthesis; L-lysine biosynthesis via DAP pathway; (S)-tetrahydrodipicolinate from L-aspartate: step 4/4. Catalyzes the conversion of 4-hydroxy-tetrahydrodipicolinate (HTPA) to tetrahydrodipicolinate. This Haemophilus influenzae (strain ATCC 51907 / DSM 11121 / KW20 / Rd) protein is 4-hydroxy-tetrahydrodipicolinate reductase.